The following is a 162-amino-acid chain: Ribosomal RNA large subunit methyltransferase H (162 aa).

S-adenosyl-L-methionine is bound by residues leucine 78, glycine 109, and 128–133; that span reads LSALTL.

It belongs to the RNA methyltransferase RlmH family. In terms of assembly, homodimer.

It is found in the cytoplasm. It carries out the reaction pseudouridine(1915) in 23S rRNA + S-adenosyl-L-methionine = N(3)-methylpseudouridine(1915) in 23S rRNA + S-adenosyl-L-homocysteine + H(+). Specifically methylates the pseudouridine at position 1915 (m3Psi1915) in 23S rRNA. The chain is Ribosomal RNA large subunit methyltransferase H from Psychrobacter cryohalolentis (strain ATCC BAA-1226 / DSM 17306 / VKM B-2378 / K5).